A 162-amino-acid chain; its full sequence is Endoribonuclease YbeY (162 aa).

Zn(2+) contacts are provided by H128, H132, and H138.

This sequence belongs to the endoribonuclease YbeY family. Requires Zn(2+) as cofactor.

Its subcellular location is the cytoplasm. Single strand-specific metallo-endoribonuclease involved in late-stage 70S ribosome quality control and in maturation of the 3' terminus of the 16S rRNA. This chain is Endoribonuclease YbeY, found in Lactococcus lactis subsp. cremoris (strain MG1363).